The chain runs to 381 residues: KRR1 small subunit processome component homolog (381 aa).

The segment at 1–51 is disordered; sequence MASPSLERPEKGAGKSEFRNQKPKPENQDESELLTVPDGWKEPAFSKEDNP. The residue at position 2 (Ala-2) is an N-acetylalanine. A phosphoserine mark is found at Ser-3 and Ser-5. 2 stretches are compositionally biased toward basic and acidic residues: residues 7–27 and 39–51; these read ERPE…KPEN and GWKE…EDNP. Lys-24 is covalently cross-linked (Glycyl lysine isopeptide (Lys-Gly) (interchain with G-Cter in SUMO2)). Residues 154-206 enclose the KH domain; that stretch reads KERFVKRRQRLIGPKGSTLKALELLTNCYIMVQGNTVSAIGPFSGLKEVRKVV. Basic residues predominate over residues 250 to 262; the sequence is NVNKRKEPKKKTV. Disordered stretches follow at residues 250–278 and 309–338; these read NVNK…ESQI and AISK…ASTE. Residues Lys-340 and Lys-369 each participate in a glycyl lysine isopeptide (Lys-Gly) (interchain with G-Cter in SUMO2) cross-link.

This sequence belongs to the KRR1 family. As to quaternary structure, part of the small subunit (SSU) processome, composed of more than 70 proteins and the RNA chaperone small nucleolar RNA (snoRNA) U3. In terms of assembly, (Microbial infection) Directly interacts with HIV-1 protein VPR. Also identified in a complex with NR3C1 and HIV-1 protein VPR.

The protein localises to the nucleus. The protein resides in the nucleolus. It is found in the cytoplasm. Functionally, part of the small subunit (SSU) processome, first precursor of the small eukaryotic ribosomal subunit. During the assembly of the SSU processome in the nucleolus, many ribosome biogenesis factors, an RNA chaperone and ribosomal proteins associate with the nascent pre-rRNA and work in concert to generate RNA folding, modifications, rearrangements and cleavage as well as targeted degradation of pre-ribosomal RNA by the RNA exosome. This chain is KRR1 small subunit processome component homolog, found in Homo sapiens (Human).